A 609-amino-acid polypeptide reads, in one-letter code: CTTNBP2 N-terminal-like protein (609 aa).

Positions 1–10 are enriched in polar residues; it reads MEQNSNSSVA. A disordered region spans residues 1–29; the sequence is MEQNSNSSVADTFAEAPATDADYGTENCS. 2 coiled-coil regions span residues 182 to 264 and 303 to 370; these read RMVN…QKQI and IAEG…QQLG. Positions 556–584 are disordered; that stretch reads PPAGARGAPPPIPTKPIVPPKREPSLSRL. Pro residues predominate over residues 563-574; the sequence is APPPIPTKPIVP. A Phosphoserine modification is found at Ser-586.

The protein resides in the cell projection. It is found in the lamellipodium. The protein localises to the cytoplasm. Its subcellular location is the cytoskeleton. It localises to the stress fiber. Functionally, regulates lamellipodial actin dynamics in a Cortactin-dependent manner and is therefore likely involved in controlling actin branch density, actin-retrograde flow rates and lamellipodial protrusion. Functions by slowing the dissociation of Cortactin from Arp2/3 nucleated branches thereby increasing branch nucleation and junction stability. Associates with core striatin-interacting phosphatase and kinase (STRIPAK) complex to form CTTNBP2NL-STRIPAK complexes. STRIPAK complexes have critical roles in protein (de)phosphorylation and are regulators of multiple signaling pathways including Hippo, MAPK, nuclear receptor and cytoskeleton remodeling. Different types of STRIPAK complexes are involved in a variety of biological processes such as cell growth, differentiation, apoptosis, metabolism and immune regulation. In Drosophila melanogaster (Fruit fly), this protein is CTTNBP2 N-terminal-like protein.